Consider the following 424-residue polypeptide: 3-oxo-tetronate kinase (424 aa).

Residues Ser-260, 364-367, and Gly-407 contribute to the ATP site; that span reads GGET.

Belongs to the four-carbon acid sugar kinase family.

The enzyme catalyses 3-dehydro-L-erythronate + ATP = 3-dehydro-4-O-phospho-L-erythronate + ADP + H(+). It catalyses the reaction 3-dehydro-D-erythronate + ATP = 3-dehydro-4-O-phospho-D-erythronate + ADP + H(+). Functionally, catalyzes the ATP-dependent phosphorylation of 3-oxo-tetronate to 3-oxo-tetronate 4-phosphate. In Pectobacterium atrosepticum (strain SCRI 1043 / ATCC BAA-672) (Erwinia carotovora subsp. atroseptica), this protein is 3-oxo-tetronate kinase.